The primary structure comprises 132 residues: Small ribosomal subunit protein uS8 (132 aa).

It belongs to the universal ribosomal protein uS8 family. Part of the 30S ribosomal subunit. Contacts proteins S5 and S12.

One of the primary rRNA binding proteins, it binds directly to 16S rRNA central domain where it helps coordinate assembly of the platform of the 30S subunit. This is Small ribosomal subunit protein uS8 from Ligilactobacillus salivarius (strain UCC118) (Lactobacillus salivarius).